A 274-amino-acid chain; its full sequence is Cytochrome b-c1 complex subunit Rieske, mitochondrial (274 aa).

The Mitochondrial matrix portion of the chain corresponds to 79–103 (SHTDVKVPDFYDYRRLEVLDSTKSS). The helical transmembrane segment at 104–140 (RESSEARKGFSYLVTAVTTVGVAYAAKNAVTQFISSM) threads the bilayer. At 141-274 (SASADVLAMA…FTSDDMVVVG (134 aa)) the chain is on the mitochondrial intermembrane side. The Rieske domain occupies 187-272 (EAAVELSQLR…YEFTSDDMVV (86 aa)). Cysteine 217, histidine 219, cysteine 236, histidine 239, and serine 241 together coordinate [2Fe-2S] cluster. Cysteine 222 and cysteine 238 form a disulfide bridge.

The protein belongs to the Rieske iron-sulfur protein family. Component of the ubiquinol-cytochrome c oxidoreductase (cytochrome b-c1 complex, complex III, CIII), a multisubunit enzyme composed of 11 subunits. The complex is composed of 3 respiratory subunits cytochrome b, cytochrome c1 and Rieske protein UQCRFS1, 2 core protein subunits UQCRC1/QCR1 and UQCRC2/QCR2, and 6 low-molecular weight protein subunits UQCRH/QCR6, UQCRB/QCR7, UQCRQ/QCR8, UQCR10/QCR9, UQCR11/QCR10 and subunit 9, the cleavage product of Rieske protein UQCRFS1. The complex exists as an obligatory dimer and forms supercomplexes (SCs) in the inner mitochondrial membrane with NADH-ubiquinone oxidoreductase (complex I, CI) and cytochrome c oxidase (complex IV, CIV), resulting in different assemblies (supercomplex SCI(1)III(2)IV(1) and megacomplex MCI(2)III(2)IV(2)). Incorporation of the Rieske protein UQCRFS1 is the penultimate step in complex III assembly. Interacts with TTC19, which is involved in the clearance of UQCRFS1 fragments. In terms of assembly, component of the ubiquinol-cytochrome c oxidoreductase (cytochrome b-c1 complex, complex III, CIII). Subunit 9 corresponds to the mitochondrial targeting sequence (MTS) of Rieske protein UQCRFS1. It is retained after processing and incorporated inside complex III, where it remains bound to the complex and localizes between the 2 core subunits UQCRC1/QCR1 and UQCRC2/QCR2. It depends on [2Fe-2S] cluster as a cofactor. Proteolytic processing is necessary for the correct insertion of UQCRFS1 in the complex III dimer. Several fragments are generated during UQCRFS1 insertion, most probably due to the endogenous matrix-processing peptidase (MPP) activity of the 2 core protein subunits UQCRC1/QCR1 and UQCRC2/QCR2, which are homologous to the 2 mitochondrial-processing peptidase (MPP) subunits beta-MPP and alpha-MPP respectively. The action of the protease is also necessary for the clearance of the UQCRFS1 fragments.

The protein localises to the mitochondrion inner membrane. It catalyses the reaction a quinol + 2 Fe(III)-[cytochrome c](out) = a quinone + 2 Fe(II)-[cytochrome c](out) + 2 H(+)(out). Its function is as follows. Component of the ubiquinol-cytochrome c oxidoreductase, a multisubunit transmembrane complex that is part of the mitochondrial electron transport chain which drives oxidative phosphorylation. The respiratory chain contains 3 multisubunit complexes succinate dehydrogenase (complex II, CII), ubiquinol-cytochrome c oxidoreductase (cytochrome b-c1 complex, complex III, CIII) and cytochrome c oxidase (complex IV, CIV), that cooperate to transfer electrons derived from NADH and succinate to molecular oxygen, creating an electrochemical gradient over the inner membrane that drives transmembrane transport and the ATP synthase. The cytochrome b-c1 complex catalyzes electron transfer from ubiquinol to cytochrome c, linking this redox reaction to translocation of protons across the mitochondrial inner membrane, with protons being carried across the membrane as hydrogens on the quinol. In the process called Q cycle, 2 protons are consumed from the matrix, 4 protons are released into the intermembrane space and 2 electrons are passed to cytochrome c. The Rieske protein is a catalytic core subunit containing a [2Fe-2S] iron-sulfur cluster. It cycles between 2 conformational states during catalysis to transfer electrons from the quinol bound in the Q(0) site in cytochrome b to cytochrome c1. Incorporation of UQCRFS1 is the penultimate step in complex III assembly. Component of the ubiquinol-cytochrome c oxidoreductase (cytochrome b-c1 complex, complex III, CIII). UQCRFS1 undergoes proteolytic processing once it is incorporated in the complex III dimer. One of the fragments, called subunit 9, corresponds to its mitochondrial targeting sequence (MTS). The proteolytic processing is necessary for the correct insertion of UQCRFS1 in the complex III dimer, but the persistence of UQCRFS1-derived fragments may prevent newly imported UQCRFS1 to be processed and assembled into complex III and is detrimental for the complex III structure and function. In Theropithecus gelada (Gelada baboon), this protein is Cytochrome b-c1 complex subunit Rieske, mitochondrial (UQCRFS1).